A 560-amino-acid polypeptide reads, in one-letter code: MARPDDEVGPAVAPGHPLGKGYLPVPKGAPDGEARLVPQNGPEALNGGPVLDPLVAGAQDGPQALIAAEEETQARLLPAGDGEDVPCPACPPRTALSPRRFVVLLIFSLYSLVNAFQWIQYSSISNVFEDFYEVSPLHINWLSMVYMVAYVPLIFPATWLLDTRGLRLTALLGSGLNCLGAWVKCGSVQRHLFWVTMLGQILCSVAQVFILGLPSPVASVWFGPKEVSTACATAVLGNQLGTAVGFLLPPVLVPALGTQNNTGLLAHTQNNTDLLAHNINTMFYGTAFISTFLFFLTVIAFKEKPPLPPSQAQAILRDSPPEEYSYKSSIWNLCRNIPFVLLLVSYGIMTGAFYSISTLLNQIILTYYVGEEVNAGRIGLTLVVAGMVGSILCGLWLDYTKTYKQTTLIVYVLSFIGMLIFTFTLNLGYIVALFFTGGILGFFMTGYLPLGFEFAVEITYPESEGMSSGLLNTAAQILGIFFTLAQGKITTDYNSPEAGNIFLCAWMFVGIILTALIKSDLRRHNINTGLTNIDVKAVPVDSRVDPKPKAMVSIQSESSL.

A disordered region spans residues 1 to 43 (MARPDDEVGPAVAPGHPLGKGYLPVPKGAPDGEARLVPQNGPE). Topologically, residues 1–92 (MARPDDEVGP…EDVPCPACPP (92 aa)) are cytoplasmic. A helical membrane pass occupies residues 93–117 (RTALSPRRFVVLLIFSLYSLVNAFQ). The Extracellular portion of the chain corresponds to 118–135 (WIQYSSISNVFEDFYEVS). The chain crosses the membrane as a helical span at residues 136-163 (PLHINWLSMVYMVAYVPLIFPATWLLDT). Over 164–165 (RG) the chain is Cytoplasmic. Residues 166 to 185 (LRLTALLGSGLNCLGAWVKC) form a helical membrane-spanning segment. At 186 to 192 (GSVQRHL) the chain is on the extracellular side. A helical membrane pass occupies residues 193–221 (FWVTMLGQILCSVAQVFILGLPSPVASVW). Residue Gln-207 coordinates ethanolamine. The Cytoplasmic segment spans residues 222–226 (FGPKE). A helical membrane pass occupies residues 227-252 (VSTACATAVLGNQLGTAVGFLLPPVL). At 253 to 270 (VPALGTQNNTGLLAHTQN) the chain is on the extracellular side. N-linked (GlcNAc...) asparagine glycosylation occurs at Asn-270. Residues 271–300 (NTDLLAHNINTMFYGTAFISTFLFFLTVIA) form a helical membrane-spanning segment. The Cytoplasmic segment spans residues 301 to 336 (FKEKPPLPPSQAQAILRDSPPEEYSYKSSIWNLCRN). A helical transmembrane segment spans residues 337 to 367 (IPFVLLLVSYGIMTGAFYSISTLLNQIILTY). Topologically, residues 368-371 (YVGE) are extracellular. A helical transmembrane segment spans residues 372–400 (EVNAGRIGLTLVVAGMVGSILCGLWLDYT). Over 401-402 (KT) the chain is Cytoplasmic. Residues 403-425 (YKQTTLIVYVLSFIGMLIFTFTL) form a helical membrane-spanning segment. Residues 426 to 428 (NLG) are Extracellular-facing. Residues 429–458 (YIVALFFTGGILGFFMTGYLPLGFEFAVEI) traverse the membrane as a helical segment. The Cytoplasmic portion of the chain corresponds to 459-466 (TYPESEGM). A helical membrane pass occupies residues 467–492 (SSGLLNTAAQILGIFFTLAQGKITTD). Gln-476 lines the ethanolamine pocket. Gln-476 is a choline binding site. Residues 493–495 (YNS) are Extracellular-facing. The chain crosses the membrane as a helical span at residues 496–518 (PEAGNIFLCAWMFVGIILTALIK). Over 519 to 560 (SDLRRHNINTGLTNIDVKAVPVDSRVDPKPKAMVSIQSESSL) the chain is Cytoplasmic. Ser-542 carries the post-translational modification Phosphoserine.

This sequence belongs to the major facilitator superfamily. Feline leukemia virus subgroup C receptor (TC 2.A.1.28.1) family.

It is found in the cell membrane. It carries out the reaction choline(out) = choline(in). The enzyme catalyses ethanolamine(in) = ethanolamine(out). It catalyses the reaction heme b(in) = heme b(out). Uniporter that mediates the transport of extracellular choline and ethanolamine into cells, thereby playing a key role in phospholipid biosynthesis. Choline and ethanolamine are the precursors of phosphatidylcholine and phosphatidylethanolamine, respectively, the two most abundant phospholipids. Transport is not coupled with proton transport and is exclusively driven by the choline (or ethanolamine) gradient across the plasma membrane. Also acts as a heme b transporter that mediates heme efflux from the cytoplasm to the extracellular compartment. In Mus terricolor (Earth-colored mouse), this protein is Choline/ethanolamine transporter FLVCR1 (Flvcr1).